A 61-amino-acid polypeptide reads, in one-letter code: Protein translocase subunit SecE (61 aa).

Residues methionine 1–alanine 34 lie on the Cytoplasmic side of the membrane. Residues lysine 35–glycine 55 form a helical membrane-spanning segment. The Extracellular portion of the chain corresponds to isoleucine 56 to glycine 61.

It belongs to the SecE/SEC61-gamma family. Component of the Sec protein translocase complex. Heterotrimer consisting of alpha (SecY), beta (SecG) and gamma (SecE) subunits. The heterotrimers can form oligomers, although 1 heterotrimer is thought to be able to translocate proteins. Interacts with the ribosome. May interact with SecDF, and other proteins may be involved.

The protein localises to the cell membrane. Its function is as follows. Essential subunit of the protein translocation channel SecYEG. Clamps together the 2 halves of SecY. May contact the channel plug during translocation. The protein is Protein translocase subunit SecE of Pyrococcus furiosus (strain ATCC 43587 / DSM 3638 / JCM 8422 / Vc1).